We begin with the raw amino-acid sequence, 308 residues long: GTPase Era (308 aa).

The Era-type G domain maps to 14-181 (RCGFVALIGA…KQALAAMVPP (168 aa)). A G1 region spans residues 22–29 (GAPNVGKS). Residue 22–29 (GAPNVGKS) coordinates GTP. A G2 region spans residues 48-52 (QTTRA). The interval 69–72 (DTPG) is G3. GTP contacts are provided by residues 69 to 73 (DTPGI) and 131 to 134 (NKVD). Residues 131 to 134 (NKVD) are G4. Residues 160 to 162 (ISA) are G5. Positions 212-289 (LHQELPYQST…HLFLFVKVRE (78 aa)) constitute a KH type-2 domain.

It belongs to the TRAFAC class TrmE-Era-EngA-EngB-Septin-like GTPase superfamily. Era GTPase family. Monomer.

Its subcellular location is the cytoplasm. The protein localises to the cell inner membrane. In terms of biological role, an essential GTPase that binds both GDP and GTP, with rapid nucleotide exchange. Plays a role in 16S rRNA processing and 30S ribosomal subunit biogenesis and possibly also in cell cycle regulation and energy metabolism. This chain is GTPase Era, found in Bradyrhizobium sp. (strain BTAi1 / ATCC BAA-1182).